A 447-amino-acid polypeptide reads, in one-letter code: Phosphoglucosamine mutase (447 aa).

S102 (phosphoserine intermediate) is an active-site residue. Residues S102, D241, D243, and D245 each coordinate Mg(2+). At S102 the chain carries Phosphoserine.

Belongs to the phosphohexose mutase family. It depends on Mg(2+) as a cofactor. Post-translationally, activated by phosphorylation.

The enzyme catalyses alpha-D-glucosamine 1-phosphate = D-glucosamine 6-phosphate. Its function is as follows. Catalyzes the conversion of glucosamine-6-phosphate to glucosamine-1-phosphate. The sequence is that of Phosphoglucosamine mutase from Pseudomonas syringae pv. syringae (strain B728a).